We begin with the raw amino-acid sequence, 221 residues long: Large ribosomal subunit protein uL4 (221 aa).

The disordered stretch occupies residues 44–102; sequence AARQGTHKVKRRGEVRGGGKKPYRQKGTGRARQGSTRAPQFAGGGVVHGPTPRDYSQRT. Over residues 61-72 the composition is skewed to basic residues; that stretch reads GGKKPYRQKGTG.

The protein belongs to the universal ribosomal protein uL4 family. Part of the 50S ribosomal subunit.

Its function is as follows. One of the primary rRNA binding proteins, this protein initially binds near the 5'-end of the 23S rRNA. It is important during the early stages of 50S assembly. It makes multiple contacts with different domains of the 23S rRNA in the assembled 50S subunit and ribosome. Functionally, forms part of the polypeptide exit tunnel. This Streptomyces avermitilis (strain ATCC 31267 / DSM 46492 / JCM 5070 / NBRC 14893 / NCIMB 12804 / NRRL 8165 / MA-4680) protein is Large ribosomal subunit protein uL4.